The chain runs to 435 residues: MKKVHFIGIGGIGISAIARFLFEKGHKISGSDIKESKTTQELKEQGMDVITPHCKEAIKDQDFVVYSAAIKDDNVELVEARKKGIKCFSRKEILPYVLEDKRVFAVAGAHGKSTTSAMLSSLIEGSVIIGAISKQFGSNMRYAQSDNVVFEADESDSSFLNSNPYLAVVTNAEPEHMEHYDYDLAKFYAAYKGFLERAKVRVINAEDEFLSTLKLDAIRLFPSSDITELAMVVRDYQPYTSFNLKNLGKFEVFGMGQHIAIDASLAILAALHETPLKDIRENLLNFKGIKKRFDILSADKNFILIDDYAHHPTEIRATLNSVFEYAKLLGVSNVTAIFQPHRYTRLSTNLEGFKECFKGVDELVILPVYAAGEKPIEVDMKGAFSEYSPIFTDKVERVGEAIEFTDEFGVKNRLSDGIVVGFGAGDISVQLRGGY.

Residue 108–114 (GAHGKST) coordinates ATP.

It belongs to the MurCDEF family.

It localises to the cytoplasm. The enzyme catalyses UDP-N-acetyl-alpha-D-muramate + L-alanine + ATP = UDP-N-acetyl-alpha-D-muramoyl-L-alanine + ADP + phosphate + H(+). It participates in cell wall biogenesis; peptidoglycan biosynthesis. In terms of biological role, cell wall formation. The polypeptide is UDP-N-acetylmuramate--L-alanine ligase (Campylobacter curvus (strain 525.92)).